Reading from the N-terminus, the 216-residue chain is Putative flagellar filament outer layer-like protein (216 aa).

The interval 1 to 22 (MFAQDAAQTGEQTTQNQGENGN) is disordered. Low complexity predominate over residues 8-22 (QTGEQTTQNQGENGN).

It localises to the periplasmic flagellum. The protein resides in the periplasm. Functionally, might be part of the flagella. The protein is Putative flagellar filament outer layer-like protein (flaAL) of Brachyspira hyodysenteriae (strain ATCC 49526 / WA1).